The primary structure comprises 446 residues: Bifunctional protein GlmU (446 aa).

The tract at residues 1–228 is pyrophosphorylase; the sequence is MTKTAAVILA…AEELLGVNSR (228 aa). Residues 9–12, K23, Q72, 77–78, 100–102, G140, E154, N169, and N226 contribute to the UDP-N-acetyl-alpha-D-glucosamine site; these read LAAG, GT, and YGD. D102 is a Mg(2+) binding site. N226 contributes to the Mg(2+) binding site. The segment at 229 to 249 is linker; it reads SELAAAEAVIQGRLREKAMEG. The interval 250–446 is N-acetyltransferase; that stretch reads GATLTAPETV…AHMRRLTGKN (197 aa). UDP-N-acetyl-alpha-D-glucosamine is bound by residues R315 and K333. H345 (proton acceptor) is an active-site residue. The UDP-N-acetyl-alpha-D-glucosamine site is built by Y348 and N359. Residues A362, 368–369, S387, A405, and R422 each bind acetyl-CoA; that span reads NY.

It in the N-terminal section; belongs to the N-acetylglucosamine-1-phosphate uridyltransferase family. In the C-terminal section; belongs to the transferase hexapeptide repeat family. In terms of assembly, homotrimer. Mg(2+) is required as a cofactor.

It localises to the cytoplasm. The enzyme catalyses alpha-D-glucosamine 1-phosphate + acetyl-CoA = N-acetyl-alpha-D-glucosamine 1-phosphate + CoA + H(+). It catalyses the reaction N-acetyl-alpha-D-glucosamine 1-phosphate + UTP + H(+) = UDP-N-acetyl-alpha-D-glucosamine + diphosphate. The protein operates within nucleotide-sugar biosynthesis; UDP-N-acetyl-alpha-D-glucosamine biosynthesis; N-acetyl-alpha-D-glucosamine 1-phosphate from alpha-D-glucosamine 6-phosphate (route II): step 2/2. Its pathway is nucleotide-sugar biosynthesis; UDP-N-acetyl-alpha-D-glucosamine biosynthesis; UDP-N-acetyl-alpha-D-glucosamine from N-acetyl-alpha-D-glucosamine 1-phosphate: step 1/1. It functions in the pathway bacterial outer membrane biogenesis; LPS lipid A biosynthesis. In terms of biological role, catalyzes the last two sequential reactions in the de novo biosynthetic pathway for UDP-N-acetylglucosamine (UDP-GlcNAc). The C-terminal domain catalyzes the transfer of acetyl group from acetyl coenzyme A to glucosamine-1-phosphate (GlcN-1-P) to produce N-acetylglucosamine-1-phosphate (GlcNAc-1-P), which is converted into UDP-GlcNAc by the transfer of uridine 5-monophosphate (from uridine 5-triphosphate), a reaction catalyzed by the N-terminal domain. The chain is Bifunctional protein GlmU from Rhodospirillum rubrum (strain ATCC 11170 / ATH 1.1.1 / DSM 467 / LMG 4362 / NCIMB 8255 / S1).